We begin with the raw amino-acid sequence, 282 residues long: Purine nucleoside phosphorylase (282 aa).

Phosphate is bound by residues Ser46, His78, and Arg103–His105. The active site involves Glu204. Glu204 contacts a purine D-ribonucleoside. Position 223 (Ser223) interacts with phosphate. Asn246 serves as a coordination point for a purine D-ribonucleoside.

This sequence belongs to the PNP/MTAP phosphorylase family. As to quaternary structure, homotrimer.

It catalyses the reaction a purine 2'-deoxy-D-ribonucleoside + phosphate = a purine nucleobase + 2-deoxy-alpha-D-ribose 1-phosphate. It participates in purine metabolism; purine nucleoside salvage. Its function is as follows. The purine nucleoside phosphorylases catalyze the phosphorolytic breakdown of the N-glycosidic bond in the beta-(deoxy)ribonucleoside molecules, with the formation of the corresponding free purine bases and pentose-1-phosphate. Cleaves guanosine, inosine, 2'-deoxyguanosine and 2'-deoxyinosine. The protein is Purine nucleoside phosphorylase (punA) of Cellulomonas sp.